We begin with the raw amino-acid sequence, 152 residues long: Pleckstrin homology-like domain family A member 2 (152 aa).

A phosphoserine mark is found at Ser3 and Ser42. The PH domain occupies 7–99 (VLREGELEKR…WNAAIALALI (93 aa)). Positions 112–152 (SRQERTAPAAPAEDAVAAAAAAPSEPSEPSRPSPQPKPRTP) are disordered. The span at 118 to 138 (APAAPAEDAVAAAAAAPSEPS) shows a compositional bias: low complexity. The segment covering 140-152 (PSRPSPQPKPRTP) has biased composition (pro residues). Ser141 and Ser144 each carry phosphoserine. Phosphothreonine is present on Thr151.

The protein belongs to the PHLDA2 family. Expressed in placenta and adult prostate gland. In placenta, it is present in all cells of the villous cytotrophoblast. The protein is absent in cells from hydatidiform moles. Hydatidiform mole is a gestation characterized by abnormal development of both fetus and trophoblast. The majority of hydatidiform moles are associated with an excess of paternal to maternal genomes and are likely to result from the abnormal expression of imprinted genes (at protein level). Expressed at low levels in adult liver and lung, and fetal liver. Expressed in adult brain and neuroblastoma, medullablastoma and glioblastoma cell lines.

It localises to the cytoplasm. Its subcellular location is the membrane. Functionally, plays a role in regulating placenta growth. May act via its PH domain that competes with other PH domain-containing proteins, thereby preventing their binding to membrane lipids. In Homo sapiens (Human), this protein is Pleckstrin homology-like domain family A member 2 (PHLDA2).